We begin with the raw amino-acid sequence, 349 residues long: Thylakoid lumenal 29 kDa protein, chloroplastic (349 aa).

Phosphoserine is present on Ser-155.

It belongs to the peroxidase family.

The protein localises to the plastid. It is found in the chloroplast thylakoid lumen. This is Thylakoid lumenal 29 kDa protein, chloroplastic (TL29) from Arabidopsis thaliana (Mouse-ear cress).